The following is a 120-amino-acid chain: UPF0295 protein Exig_0660 (120 aa).

2 helical membrane-spanning segments follow: residues 16–36 and 41–61; these read AMFL…LKQF and VILM…YFLI.

Belongs to the UPF0295 family.

It is found in the cell membrane. This Exiguobacterium sibiricum (strain DSM 17290 / CCUG 55495 / CIP 109462 / JCM 13490 / 255-15) protein is UPF0295 protein Exig_0660.